A 117-amino-acid chain; its full sequence is Mitochondrial import inner membrane translocase subunit Tim10B (117 aa).

A Twin CX3C motif motif is present at residues Cys22–Cys46. 2 disulfide bridges follow: Cys22–Cys46 and Cys26–Cys42. A compositionally biased stretch (basic and acidic residues) spans Glu75 to Glu97. The tract at residues Glu75–Met117 is disordered.

The protein belongs to the small Tim family. Component of the TIM22 complex, whose core is composed of Tim22, associated with peripheral protein Tim9b/Tim10b and the 70 kDa heterohexamer. In most cases, the 70 kDa complex is composed of TIMM9 and TIMM10.

The protein resides in the mitochondrion inner membrane. Functionally, component of the TIM22 complex, a complex that mediates the import and insertion of multi-pass transmembrane proteins into the mitochondrial inner membrane. The TIM22 complex forms a twin-pore translocase that uses the membrane potential as the external driving force. In the TIM22 complex, it may act as a docking point for the soluble 70 kDa complex that guides the target proteins in transit through the aqueous mitochondrial intermembrane space. The chain is Mitochondrial import inner membrane translocase subunit Tim10B (Tim9b) from Drosophila melanogaster (Fruit fly).